The following is a 413-amino-acid chain: 26S proteasome regulatory subunit 6B homolog (413 aa).

Residues 1–30 are disordered; it reads MATAMVLDPKPAEKLPATRPETSITDVPSD. Positions 32 to 80 form a coiled coil; it reads EDDLYARLKSLQRQLEFIEIQEEYVKDELKNLRREHLRAQEEVKRIQSV. 201–208 provides a ligand contact to ATP; sequence GPPGTGKT.

The protein belongs to the AAA ATPase family.

The protein localises to the cytoplasm. It is found in the nucleus. In terms of biological role, the 26S proteasome is involved in the ATP-dependent degradation of ubiquitinated proteins. The regulatory (or ATPase) complex confers ATP dependency and substrate specificity to the 26S complex. The polypeptide is 26S proteasome regulatory subunit 6B homolog (Solanum tuberosum (Potato)).